The sequence spans 361 residues: Phospho-N-acetylmuramoyl-pentapeptide-transferase (361 aa).

10 helical membrane passes run 28 to 48 (LAALTALSISFLIGPAMIRSL), 73 to 93 (TMGGTLILTAVIVTTLLWADL), 97 to 117 (YIWVVSLTTLGFGAIGWVDDY), 134 to 154 (FFWQSIIALLVAVYLAMTADL), 168 to 188 (VAIPLGTFLFIVLTYLVIVGT), 200 to 220 (GLAIMPTVMISGALAIFAYVA), 237 to 257 (AGELAVFCGALTGAGLAFLWF), 264 to 284 (VFMGDVGALALGAALGVITVI), 289 to 309 (IVLVIMGGVFVMEALSVMIQV), and 338 to 358 (QVVVRFWIITLILVLIGLSTL).

The protein belongs to the glycosyltransferase 4 family. MraY subfamily. It depends on Mg(2+) as a cofactor.

It is found in the cell inner membrane. The catalysed reaction is UDP-N-acetyl-alpha-D-muramoyl-L-alanyl-gamma-D-glutamyl-meso-2,6-diaminopimeloyl-D-alanyl-D-alanine + di-trans,octa-cis-undecaprenyl phosphate = di-trans,octa-cis-undecaprenyl diphospho-N-acetyl-alpha-D-muramoyl-L-alanyl-D-glutamyl-meso-2,6-diaminopimeloyl-D-alanyl-D-alanine + UMP. It functions in the pathway cell wall biogenesis; peptidoglycan biosynthesis. In terms of biological role, catalyzes the initial step of the lipid cycle reactions in the biosynthesis of the cell wall peptidoglycan: transfers peptidoglycan precursor phospho-MurNAc-pentapeptide from UDP-MurNAc-pentapeptide onto the lipid carrier undecaprenyl phosphate, yielding undecaprenyl-pyrophosphoryl-MurNAc-pentapeptide, known as lipid I. The protein is Phospho-N-acetylmuramoyl-pentapeptide-transferase of Nitrosomonas europaea (strain ATCC 19718 / CIP 103999 / KCTC 2705 / NBRC 14298).